The following is an 89-amino-acid chain: Large ribosomal subunit protein bL27 (89 aa).

Residues 1–24 are disordered; that stretch reads MAHKKGTGSTRNGRDSRSQRLGVK.

It belongs to the bacterial ribosomal protein bL27 family.

The polypeptide is Large ribosomal subunit protein bL27 (Microcystis aeruginosa (strain NIES-843 / IAM M-2473)).